Reading from the N-terminus, the 384-residue chain is 8-amino-7-oxononanoate synthase (384 aa).

R21 contacts substrate. 108-109 (GF) is a pyridoxal 5'-phosphate binding site. H133 is a binding site for substrate. The pyridoxal 5'-phosphate site is built by S179, H207, and T233. The residue at position 236 (K236) is an N6-(pyridoxal phosphate)lysine. A substrate-binding site is contributed by T352.

Belongs to the class-II pyridoxal-phosphate-dependent aminotransferase family. BioF subfamily. Homodimer. Requires pyridoxal 5'-phosphate as cofactor.

It catalyses the reaction 6-carboxyhexanoyl-[ACP] + L-alanine + H(+) = (8S)-8-amino-7-oxononanoate + holo-[ACP] + CO2. It participates in cofactor biosynthesis; biotin biosynthesis. In terms of biological role, catalyzes the decarboxylative condensation of pimeloyl-[acyl-carrier protein] and L-alanine to produce 8-amino-7-oxononanoate (AON), [acyl-carrier protein], and carbon dioxide. The chain is 8-amino-7-oxononanoate synthase from Escherichia coli (strain K12 / DH10B).